Here is a 309-residue protein sequence, read N- to C-terminus: HPr kinase/phosphorylase (309 aa).

Catalysis depends on residues His-138 and Lys-159. 153-160 (GQSGVGKS) provides a ligand contact to ATP. Ser-160 lines the Mg(2+) pocket. Catalysis depends on Asp-177, which acts as the Proton acceptor; for phosphorylation activity. Proton donor; for dephosphorylation activity. The important for the catalytic mechanism of both phosphorylation and dephosphorylation stretch occupies residues 201–210 (LEIRGLGIIN). Residue Glu-202 participates in Mg(2+) binding. Arg-243 is an active-site residue. The important for the catalytic mechanism of dephosphorylation stretch occupies residues 264–269 (PVRPGR).

This sequence belongs to the HPrK/P family. Homohexamer. Mg(2+) is required as a cofactor.

It carries out the reaction [HPr protein]-L-serine + ATP = [HPr protein]-O-phospho-L-serine + ADP + H(+). The catalysed reaction is [HPr protein]-O-phospho-L-serine + phosphate + H(+) = [HPr protein]-L-serine + diphosphate. Its function is as follows. Catalyzes the ATP- as well as the pyrophosphate-dependent phosphorylation of a specific serine residue in HPr, a phosphocarrier protein of the phosphoenolpyruvate-dependent sugar phosphotransferase system (PTS). HprK/P also catalyzes the pyrophosphate-producing, inorganic phosphate-dependent dephosphorylation (phosphorolysis) of seryl-phosphorylated HPr (P-Ser-HPr). The two antagonistic activities of HprK/P are regulated by several intracellular metabolites, which change their concentration in response to the absence or presence of rapidly metabolisable carbon sources (glucose, fructose, etc.) in the growth medium. Also phosphorylates/dephosphorylates the HPr-like catabolite repression protein crh on a specific serine residue. Therefore, by controlling the phosphorylation state of HPr and crh, HPrK/P is a sensor enzyme that plays a major role in the regulation of carbon metabolism and sugar transport: it mediates carbon catabolite repression (CCR), and regulates PTS-catalyzed carbohydrate uptake and inducer exclusion. The polypeptide is HPr kinase/phosphorylase (Bacillus cereus (strain B4264)).